A 462-amino-acid polypeptide reads, in one-letter code: Cysteine--tRNA ligase (462 aa).

Zn(2+) is bound at residue Cys-28. Positions 30–40 (ITVYDLCHIGH) match the 'HIGH' region motif. The Zn(2+) site is built by Cys-210, His-235, and Glu-239. The short motif at 267-271 (KMSKS) is the 'KMSKS' region element. Residue Lys-270 participates in ATP binding.

This sequence belongs to the class-I aminoacyl-tRNA synthetase family. Monomer. Zn(2+) is required as a cofactor.

The protein localises to the cytoplasm. It carries out the reaction tRNA(Cys) + L-cysteine + ATP = L-cysteinyl-tRNA(Cys) + AMP + diphosphate. This chain is Cysteine--tRNA ligase, found in Erwinia tasmaniensis (strain DSM 17950 / CFBP 7177 / CIP 109463 / NCPPB 4357 / Et1/99).